A 260-amino-acid polypeptide reads, in one-letter code: Type III pantothenate kinase (260 aa).

6–13 (DSGNTNIV) provides a ligand contact to ATP. Position 108-111 (108-111 (GADR)) interacts with substrate. The Proton acceptor role is filled by aspartate 110. Aspartate 130 serves as a coordination point for K(+). Residue threonine 133 participates in ATP binding. Substrate is bound at residue threonine 185.

Belongs to the type III pantothenate kinase family. As to quaternary structure, homodimer. NH4(+) serves as cofactor. Requires K(+) as cofactor.

It is found in the cytoplasm. It carries out the reaction (R)-pantothenate + ATP = (R)-4'-phosphopantothenate + ADP + H(+). It participates in cofactor biosynthesis; coenzyme A biosynthesis; CoA from (R)-pantothenate: step 1/5. Functionally, catalyzes the phosphorylation of pantothenate (Pan), the first step in CoA biosynthesis. In Paramagnetospirillum magneticum (strain ATCC 700264 / AMB-1) (Magnetospirillum magneticum), this protein is Type III pantothenate kinase.